Here is a 154-residue protein sequence, read N- to C-terminus: Protein ripply (154 aa).

Positions 38–41 (WRPW) match the WRPW motif motif. Disordered stretches follow at residues 54-86 (IRERRSKPYARPSSTSNGSTRGPEPGPTSFQHP) and 121-154 (EDPAQSDDSDFESDYEDDSDTDYKPLKRNAPILN). The ripply homology domain stretch occupies residues 85 to 119 (HPVKLHWSKPVYDYMYQYGKQLLDAFPVQATICIV). Residues 121-140 (EDPAQSDDSDFESDYEDDSD) are compositionally biased toward acidic residues.

The protein belongs to the ripply family. In the late gastrula stage, expression appears in the dorsal presomitic mesoderm and in the first three pairs of nascent somites. Expressed strongly in forming somites and then expression is rapidly down-regulated except in the first somite pair where expression is maintained for a longer period. Also expressed in the presumptive notochord and in the tail bud at the 48 hour larval stage. Expression disappears by the 72 hour stage.

Its subcellular location is the nucleus. Its function is as follows. May play a role in somitogenesis. This chain is Protein ripply, found in Branchiostoma belcheri (Amphioxus).